Consider the following 262-residue polypeptide: Thiazole synthase (262 aa).

Lysine 105 (schiff-base intermediate with DXP) is an active-site residue. 1-deoxy-D-xylulose 5-phosphate-binding positions include glycine 166, 192–193 (AG), and 214–215 (NT).

The protein belongs to the ThiG family. As to quaternary structure, homotetramer. Forms heterodimers with either ThiH or ThiS.

The protein resides in the cytoplasm. The catalysed reaction is [ThiS sulfur-carrier protein]-C-terminal-Gly-aminoethanethioate + 2-iminoacetate + 1-deoxy-D-xylulose 5-phosphate = [ThiS sulfur-carrier protein]-C-terminal Gly-Gly + 2-[(2R,5Z)-2-carboxy-4-methylthiazol-5(2H)-ylidene]ethyl phosphate + 2 H2O + H(+). It participates in cofactor biosynthesis; thiamine diphosphate biosynthesis. Catalyzes the rearrangement of 1-deoxy-D-xylulose 5-phosphate (DXP) to produce the thiazole phosphate moiety of thiamine. Sulfur is provided by the thiocarboxylate moiety of the carrier protein ThiS. In vitro, sulfur can be provided by H(2)S. This chain is Thiazole synthase, found in Phenylobacterium zucineum (strain HLK1).